Reading from the N-terminus, the 167-residue chain is Lipoprotein signal peptidase (167 aa).

The next 3 membrane-spanning stretches (helical) occupy residues 10–30 (LIWL…KAWV), 68–88 (WQMW…TFWL), and 98–118 (SALP…DRFL). Catalysis depends on residues D124 and D142. The helical transmembrane segment at 138–158 (FNLADSAIVAGAIGIGLLSLF) threads the bilayer.

It belongs to the peptidase A8 family.

The protein resides in the cell inner membrane. It carries out the reaction Release of signal peptides from bacterial membrane prolipoproteins. Hydrolyzes -Xaa-Yaa-Zaa-|-(S,diacylglyceryl)Cys-, in which Xaa is hydrophobic (preferably Leu), and Yaa (Ala or Ser) and Zaa (Gly or Ala) have small, neutral side chains.. It participates in protein modification; lipoprotein biosynthesis (signal peptide cleavage). In terms of biological role, this protein specifically catalyzes the removal of signal peptides from prolipoproteins. This chain is Lipoprotein signal peptidase, found in Xylella fastidiosa (strain M23).